Consider the following 213-residue polypeptide: Large ribosomal subunit protein uL3 (213 aa).

The disordered stretch occupies residues 122–147 (AIKRHGQSRGPMAHGSRYHRRPGSMG).

Belongs to the universal ribosomal protein uL3 family. In terms of assembly, part of the 50S ribosomal subunit. Forms a cluster with proteins L14 and L19.

Its function is as follows. One of the primary rRNA binding proteins, it binds directly near the 3'-end of the 23S rRNA, where it nucleates assembly of the 50S subunit. This is Large ribosomal subunit protein uL3 from Geobacillus stearothermophilus (Bacillus stearothermophilus).